Consider the following 258-residue polypeptide: Phosphate import ATP-binding protein PstB (258 aa).

One can recognise an ABC transporter domain in the interval 12–253 (IQVHNLNFYY…PKMKQTEDYI (242 aa)). An ATP-binding site is contributed by 44-51 (GPSGCGKS).

Belongs to the ABC transporter superfamily. Phosphate importer (TC 3.A.1.7) family. As to quaternary structure, the complex is composed of two ATP-binding proteins (PstB), two transmembrane proteins (PstC and PstA) and a solute-binding protein (PstS).

Its subcellular location is the cell inner membrane. The enzyme catalyses phosphate(out) + ATP + H2O = ADP + 2 phosphate(in) + H(+). Its function is as follows. Part of the ABC transporter complex PstSACB involved in phosphate import. Responsible for energy coupling to the transport system. This chain is Phosphate import ATP-binding protein PstB, found in Photorhabdus laumondii subsp. laumondii (strain DSM 15139 / CIP 105565 / TT01) (Photorhabdus luminescens subsp. laumondii).